We begin with the raw amino-acid sequence, 20 residues long: Brevinin-1T (20 aa).

Residues Cys14 and Cys20 are joined by a disulfide bond.

The protein belongs to the frog skin active peptide (FSAP) family. Brevinin subfamily. As to expression, expressed by the skin glands.

It is found in the secreted. In terms of biological role, antibacterial activity against representative Gram-negative and Gram-positive bacteria and exhibits a very high hemolytic activity. In Rana temporaria (European common frog), this protein is Brevinin-1T.